A 394-amino-acid chain; its full sequence is 8-amino-7-oxononanoate synthase (394 aa).

Arg-18 serves as a coordination point for substrate. Residue 105–106 coordinates pyridoxal 5'-phosphate; sequence GY. A substrate-binding site is contributed by His-130. Residues Ser-175, His-203, and Thr-232 each contribute to the pyridoxal 5'-phosphate site. At Lys-235 the chain carries N6-(pyridoxal phosphate)lysine. Thr-349 serves as a coordination point for substrate.

This sequence belongs to the class-II pyridoxal-phosphate-dependent aminotransferase family. BioF subfamily. As to quaternary structure, homodimer. Pyridoxal 5'-phosphate is required as a cofactor.

It catalyses the reaction 6-carboxyhexanoyl-[ACP] + L-alanine + H(+) = (8S)-8-amino-7-oxononanoate + holo-[ACP] + CO2. The protein operates within cofactor biosynthesis; biotin biosynthesis. Its function is as follows. Catalyzes the decarboxylative condensation of pimeloyl-[acyl-carrier protein] and L-alanine to produce 8-amino-7-oxononanoate (AON), [acyl-carrier protein], and carbon dioxide. This chain is 8-amino-7-oxononanoate synthase, found in Marinobacter nauticus (strain ATCC 700491 / DSM 11845 / VT8) (Marinobacter aquaeolei).